The following is a 166-amino-acid chain: Endoribonuclease YbeY (166 aa).

Positions 132, 136, and 142 each coordinate Zn(2+).

The protein belongs to the endoribonuclease YbeY family. The cofactor is Zn(2+).

It is found in the cytoplasm. Single strand-specific metallo-endoribonuclease involved in late-stage 70S ribosome quality control and in maturation of the 3' terminus of the 16S rRNA. The chain is Endoribonuclease YbeY from Clostridium botulinum (strain ATCC 19397 / Type A).